The following is a 375-amino-acid chain: tRNA-specific 2-thiouridylase MnmA (375 aa).

ATP-binding positions include 16 to 23 and Met42; that span reads GMSGGVDS. The interaction with target base in tRNA stretch occupies residues 102-104; sequence NPD. Cys107 serves as the catalytic Nucleophile. Cys107 and Cys203 are oxidised to a cystine. ATP is bound at residue Gly131. The interaction with tRNA stretch occupies residues 153-155; that stretch reads KDQ. Cys203 (cysteine persulfide intermediate) is an active-site residue. Residues 315 to 316 form an interaction with tRNA region; it reads RY.

The protein belongs to the MnmA/TRMU family.

The protein localises to the cytoplasm. It carries out the reaction S-sulfanyl-L-cysteinyl-[protein] + uridine(34) in tRNA + AH2 + ATP = 2-thiouridine(34) in tRNA + L-cysteinyl-[protein] + A + AMP + diphosphate + H(+). Catalyzes the 2-thiolation of uridine at the wobble position (U34) of tRNA, leading to the formation of s(2)U34. The sequence is that of tRNA-specific 2-thiouridylase MnmA from Pseudomonas aeruginosa (strain UCBPP-PA14).